The sequence spans 438 residues: MQRNRRIEYLEDGRCRMTWNDVSARQVLRRIFDAAVASADPKIAVVNNLPERPRGRCVVVGAGKASAAMAAAVDAAWPDVDLSGIVVTRYGHAVPAGRIEILEASHPVPDEMSIKAAEKIFAAVQGLGPDDLVVALISGGGSSLLVSPTGKMTLTDKRAVNQALLASGATISEMNTVRKHLSAIKGGHLARAALPAKLVTLIISDVPGDDPSEIASGPTVADPTTLADAAAIIARYGIDLPESARAVLVQGNETPKAGEVAGEIRLVAAPSIALEAAAAAALDAGLCPLILGDALEGEAREMGRVMAGIALSARDKGLPVAAPAVILSGGESTVSLGAMTEGRGGRNTEFLLSLAVALKGASGIWAIAGDTDGIDGVEDAAGALVAPDSLIRMRDAGIDPRATLSAHDSYTAFKAIGDLVVTGPTLTNVNDIRAILIG.

The catalysed reaction is (R)-glycerate + NAD(+) = 3-hydroxypyruvate + NADH + H(+). The enzyme catalyses (R)-glycerate + NADP(+) = 3-hydroxypyruvate + NADPH + H(+). It functions in the pathway carbohydrate acid metabolism; tartrate degradation; 3-hydroxypyruvate from D-glycerate: step 1/1. Its function is as follows. Degrades an unidentified toxic product from the first step of tartrate degradation. The chain is Putative hydroxypyruvate reductase (ttuD) from Agrobacterium vitis (Rhizobium vitis).